The following is a 252-amino-acid chain: Small ribosomal subunit protein uS2 (252 aa).

It belongs to the universal ribosomal protein uS2 family. In terms of assembly, component of the small ribosomal subunit. Mature ribosomes consist of a small (40S) and a large (60S) subunit. The 40S subunit contains about 33 different proteins and 1 molecule of RNA (18S). The 60S subunit contains about 49 different proteins and 3 molecules of RNA (25S, 5.8S and 5S). Interacts with RPS21.

It localises to the cytoplasm. Functionally, required for the assembly and/or stability of the 40S ribosomal subunit. Required for the processing of the 20S rRNA-precursor to mature 18S rRNA in a late step of the maturation of 40S ribosomal subunits. The chain is Small ribosomal subunit protein uS2 from Encephalitozoon cuniculi (strain GB-M1) (Microsporidian parasite).